Consider the following 197-residue polypeptide: Recombination protein RecR (197 aa).

The C4-type zinc finger occupies C55–C70. A Toprim domain is found at Q78–P173.

Belongs to the RecR family.

Its function is as follows. May play a role in DNA repair. It seems to be involved in an RecBC-independent recombinational process of DNA repair. It may act with RecF and RecO. The sequence is that of Recombination protein RecR from Xanthomonas campestris pv. campestris (strain 8004).